The primary structure comprises 520 residues: 2-isopropylmalate synthase (520 aa).

A Pyruvate carboxyltransferase domain is found at 12–274; sequence VVIFDTTLRD…DTGIDTTMLT (263 aa). Positions 21, 209, 211, and 245 each coordinate Mn(2+). Residues 398–520 are regulatory domain; that stretch reads KLLSLSVIAG…RLHAQHAAVV (123 aa).

It belongs to the alpha-IPM synthase/homocitrate synthase family. LeuA type 1 subfamily. In terms of assembly, homodimer. The cofactor is Mn(2+).

The protein localises to the cytoplasm. It carries out the reaction 3-methyl-2-oxobutanoate + acetyl-CoA + H2O = (2S)-2-isopropylmalate + CoA + H(+). The protein operates within amino-acid biosynthesis; L-leucine biosynthesis; L-leucine from 3-methyl-2-oxobutanoate: step 1/4. Functionally, catalyzes the condensation of the acetyl group of acetyl-CoA with 3-methyl-2-oxobutanoate (2-ketoisovalerate) to form 3-carboxy-3-hydroxy-4-methylpentanoate (2-isopropylmalate). The protein is 2-isopropylmalate synthase of Methylorubrum populi (strain ATCC BAA-705 / NCIMB 13946 / BJ001) (Methylobacterium populi).